The primary structure comprises 926 residues: MAAARPALTDSLSFCLAQLTAAAGEGPGGGKDPATNETPLGRALLALRTRHIKAAEGIERFRARGGLRPLLALLRRTAAAGPAPSQAASGSAPSSVASAGSTPGHAPAAESLLTPSLPMRLRKTLDLALSILANCCTEGACRAEVRRLGGILPLVTILQCVKTDSIQNRTARALGNLAMEPESCRDIHSAGAVPFLVESLTACQDSQCLQSIVRALRNLADSPQHRLALAQQGAVRPLAELLATAPDPALTAALVRALLELSRGCSRACAEQLSLGGALGPLVSLASHPKRAIREAAILILANLCAQGLVRPALGNAGGVEVLLGELRRRRSPGGSSSATQQPLVRAVCLLCREAINRARLRDAGGLELLMGLLQDPGASAWHPRVVAALVGFLYDTGALGKLQALGLVPLLARQLCGEAGEEEEEGIEAASWDFPEERTSGQAEGGSFRSLRLWLISEGYAAGPGDISPDWSPERCPMPEPSESVSPTPGQTSMSTPRTLRKPGRIPAATPEEPWGQEGPALLLLSRFSQAPDPSGALVTGPALCGLLAYVTGAPGPPNPRALRILARLTCNPACLEAFVRTYGAALLRAWLVLGVSPDDWPVPHARPVHRSQHRELGEMLLQNLTVQAESPFGVGALTHLLLSGSPEDRVACALTLPFICRKPTLWRRLLLDQGGLRLLLTALTQPAPHPLFLFFAADSLSCLQGLVSPTASPVPLPALPLELDSPPPCLYEPLLGPAPAPAPDLHFVLDSGLQLPAQRAASAAASPFFRALLSGSFAEAQMDLVPLRGLSPGAAWPVLHHLHGCRGCGAALGPVPPPGQPLLGSKAEEALEAAGRFLLPALEEELEEAVGRIHLSPRGGPESVGEVFRLGRPRLAAHCARWTLEPGQCPRKRALALTGLVEAAGEEAGPLTEALLAVVMGIES.

Residues 82–104 show a composition bias toward low complexity; sequence PAPSQAASGSAPSSVASAGSTPG. The segment at 82 to 111 is disordered; sequence PAPSQAASGSAPSSVASAGSTPGHAPAAES. ARM repeat units follow at residues 139 to 179, 181 to 221, 223 to 263, 267 to 306, 307 to 354, 355 to 399, and 401 to 440; these read GACR…NLAM, PESC…NLAD, PQHR…ELSR, RACAEQLSLGGALGPLVSLASHPKRAIREAAILILANLCA, QGLV…LCRE, AINR…DTGA, and GKLQALGLVPLLARQLCGEAGEEEEEGIEAASWDFPEERT. Serine 337 carries the post-translational modification Phosphoserine. Residues 472 to 516 are disordered; the sequence is WSPERCPMPEPSESVSPTPGQTSMSTPRTLRKPGRIPAATPEEPW. Over residues 484-499 the composition is skewed to polar residues; sequence ESVSPTPGQTSMSTPR. The BTB domain occupies 745–813; it reads PDLHFVLDSG…LHGCRGCGAA (69 aa).

Substrate-recognition component of the BCR(ARMC5) E3 ubiquitin ligase complex, at least composed of CUL3, ARMC5 and RBX1. Ubiquitinated by a BCR (BTB-CUL3-RBX1) E3 ubiquitin ligase complex, leading to its degradation. Deubiquitinated by USP7. Expression is high in the thymus, stomach, bone marrow and lymphatic tissues (including lymph nodes and intestinal wall). Also expressed in the adrenal gland, skin and in brain structures, with noticeable levels found in the cerebellum.

It localises to the nucleus. Its subcellular location is the chromosome. It is found in the cytoplasm. It participates in protein modification; protein ubiquitination. In terms of biological role, substrate-recognition component of a BCR (BTB-CUL3-RBX1) E3 ubiquitin ligase complex that terminates RNA polymerase II (Pol II) transcription in the promoter-proximal region of genes. The BCR(ARMC5) complex provides a quality checkpoint during transcription elongation by driving premature transcription termination of transcripts that are unfavorably configured for transcriptional elongation: the BCR(ARMC5) complex acts by mediating ubiquitination of Pol II subunit POLR2A phosphorylated at 'Ser-5' of the C-terminal domain (CTD), leading to POLR2A degradation. The BCR(ARMC5) complex acts in parallel of the integrator complex and is specific for RNA Pol II originating from the promoter-proximal zone: it does not ubiquitinate elongation-stalled RNA Pol II. The BCR(ARMC5) complex also acts as a regulator of fatty acid desaturation by mediating ubiquitination and degradation of SCAP-free SREBF1 and SREBF2. Involved in fetal development, T-cell function and adrenal gland growth homeostasis. Plays a role in steroidogenesis, modulates steroidogenic enzymes expression and cortisol production. The protein is Armadillo repeat-containing protein 5 of Mus musculus (Mouse).